A 140-amino-acid chain; its full sequence is HTH-type transcriptional regulator YfmP (140 aa).

Positions 1–73 (MEWMKIDQVA…LQELQHFMET (73 aa)) constitute an HTH merR-type domain. The H-T-H motif DNA-binding region spans 6 to 25 (IDQVAKRSGLTKRTIRFYEE).

In terms of biological role, repressor of the yfmOP operon. A mutation in yfmP leads to overexpression of yfmO, probably causing a decrease in cellular copper that is eventually responsible for a reduced copper induction of copZA. This is HTH-type transcriptional regulator YfmP (yfmP) from Bacillus subtilis (strain 168).